The primary structure comprises 225 residues: NAD(P)H-quinone oxidoreductase subunit K, chloroplastic (225 aa).

4 residues coordinate [4Fe-4S] cluster: Cys43, Cys44, Cys108, and Cys139.

Belongs to the complex I 20 kDa subunit family. In terms of assembly, NDH is composed of at least 16 different subunits, 5 of which are encoded in the nucleus. [4Fe-4S] cluster is required as a cofactor.

It localises to the plastid. It is found in the chloroplast thylakoid membrane. It catalyses the reaction a plastoquinone + NADH + (n+1) H(+)(in) = a plastoquinol + NAD(+) + n H(+)(out). The catalysed reaction is a plastoquinone + NADPH + (n+1) H(+)(in) = a plastoquinol + NADP(+) + n H(+)(out). NDH shuttles electrons from NAD(P)H:plastoquinone, via FMN and iron-sulfur (Fe-S) centers, to quinones in the photosynthetic chain and possibly in a chloroplast respiratory chain. The immediate electron acceptor for the enzyme in this species is believed to be plastoquinone. Couples the redox reaction to proton translocation, and thus conserves the redox energy in a proton gradient. This chain is NAD(P)H-quinone oxidoreductase subunit K, chloroplastic, found in Platanus occidentalis (Sycamore).